A 1433-amino-acid polypeptide reads, in one-letter code: Pleckstrin homology domain-containing family H member 1 (1433 aa).

The stretch at 40–174 forms a coiled coil; the sequence is NIRHLLAERM…QILMLQDKLQ (135 aa). Disordered regions lie at residues 247-346 and 552-634; these read DKAD…LSPP and SSVP…TSSY. Over residues 252-266 the composition is skewed to polar residues; it reads PKSSQDGVDATSTVK. The segment covering 279–299 has biased composition (basic and acidic residues); the sequence is MRDRAMGGASDRDHSSDELNS. A compositionally biased stretch (low complexity) spans 308 to 318; sequence SSSSSSSSSSS. Positions 332-343 are enriched in pro residues; sequence TPTPKSPPPVSL. A compositionally biased stretch (acidic residues) spans 557 to 567; the sequence is PDDDSGSEDDS. The span at 568–578 shows a compositional bias: low complexity; it reads SSLASLHTSTL. Positions 597–606 are enriched in polar residues; that stretch reads VSTSSISSES. PH domains follow at residues 643 to 737 and 751 to 859; these read TLEK…NVLK and KPTA…VAAG. One can recognise a MyTH4 domain in the interval 896–1050; sequence FSKEGLRYPL…PSRMEILSIL (155 aa). The FERM domain maps to 1061–1392; that stretch reads FSIPVHFMNN…SYINYWTSSL (332 aa).

Critical component of the guidance pathway underlying endothelial cell migration and blood vessel patterning. Involved in mediating membrane localization of ephrin proteins, which have been shown to provide guidance cues for endothelial cell migration. The protein is Pleckstrin homology domain-containing family H member 1 (plekhh1) of Danio rerio (Zebrafish).